The sequence spans 677 residues: Sulfate transporter 2.2 (677 aa).

The Cytoplasmic segment spans residues 1–110 (MQLSSLSHTS…QYKLNLFKKD (110 aa)). The chain crosses the membrane as a helical span at residues 111-131 (LMAGLTLASLCIPQSIGYANL). Topologically, residues 132-133 (AG) are extracellular. Residues 134 to 154 (LDPEYGLYTSVVPPLIYSTMG) traverse the membrane as a helical segment. Residues 155–158 (TSRE) lie on the Cytoplasmic side of the membrane. A helical membrane pass occupies residues 159–179 (LAIGPVAVVSLLLSSMVRDLQ). At 180-190 (DPVTDPIAYRK) the chain is on the extracellular side. Residues 191–211 (IVFTVTFFAGAFQAIFGLFRL) traverse the membrane as a helical segment. The Cytoplasmic portion of the chain corresponds to 212-213 (GF). The helical transmembrane segment at 214–234 (LVDFLSHAALVGFMAGAAIVI) threads the bilayer. The Extracellular portion of the chain corresponds to 235–270 (GLQQLKGLFGLTHFTNKTDVVSVLSSVFHSLHHPWQ). Residue N250 is glycosylated (N-linked (GlcNAc...) asparagine). A helical transmembrane segment spans residues 271 to 291 (PLNFVIGSSFLIFILLARFIG). The Cytoplasmic portion of the chain corresponds to 292 to 296 (KRNNK). A helical membrane pass occupies residues 297-317 (LFWIPAMAPLISVVLATLIVY). The Extracellular segment spans residues 318 to 352 (LSNAESRGVKIVKHIKPGFNQLSVNQLQFKSPHLG). Residues 353–373 (QIAKIGLISAIIALTEAIAVG) traverse the membrane as a helical segment. The Cytoplasmic segment spans residues 374–389 (RSFATIKGYRLDGNKE). The chain crosses the membrane as a helical span at residues 390 to 410 (MMAMGFMNIAGSLSSCYVATG). The Extracellular portion of the chain corresponds to 411 to 422 (SFSRTAVNFSAG). N-linked (GlcNAc...) asparagine glycosylation occurs at N418. A helical membrane pass occupies residues 423–443 (CETVVSNIVMAITVMISLEVL). At 444–446 (TRF) the chain is on the cytoplasmic side. A helical transmembrane segment spans residues 447–467 (LYFTPTAILASIILSALPGLI). Residues 468-482 (DVSGALHIWKLDKLD) lie on the Extracellular side of the membrane. Residues 483-503 (FLVLIAAFFGVLFASVEIGLL) traverse the membrane as a helical segment. Residues 504–677 (LAVGISFARI…RARSTSHELC (174 aa)) are Cytoplasmic-facing. The 127-residue stretch at 540–666 (YPMANKTAGL…MTVGEAVDIY (127 aa)) folds into the STAS domain.

This sequence belongs to the SLC26A/SulP transporter (TC 2.A.53) family. Expressed in the phloem in roots and in the phloem of vascular bundles in leaves.

The protein resides in the membrane. In terms of biological role, low-affinity H(+)/sulfate cotransporter that may be involved in the distribution of sulfate from vascular bundles to the palisade cells of the leaves. Plays a central role in the regulation of sulfate assimilation. The sequence is that of Sulfate transporter 2.2 (SULTR2;2) from Arabidopsis thaliana (Mouse-ear cress).